Consider the following 849-residue polypeptide: Serrate RNA effector molecule homolog A (849 aa).

Disordered stretches follow at residues 1-90 and 276-409; these read MADS…HGSD and KREA…PRPL. 3 stretches are compositionally biased toward basic and acidic residues: residues 8–73, 276–306, and 314–342; these read YDRR…RHDL, KREA…KPEN, and EKPV…ETRK. The span at 354 to 364 shows a compositional bias: acidic residues; that stretch reads SDDGSDSESDT. Positions 381–405 are enriched in basic and acidic residues; the sequence is RAEETPKKEEDTEKQKEKQKEDTVK.

It belongs to the ARS2 family. In terms of assembly, interacts ncbp1/cbp80.

It is found in the nucleus. The protein localises to the nucleoplasm. It localises to the cytoplasm. Functionally, acts as a mediator between the cap-binding complex (CBC) and the primary microRNAs (miRNAs) processing machinery during cell proliferation. Contributes to the stability and delivery of capped primary miRNA transcripts to the primary miRNA processing complex, thereby playing a role in RNA-mediated gene silencing (RNAi) by miRNAs. The polypeptide is Serrate RNA effector molecule homolog A (srrt-a) (Xenopus laevis (African clawed frog)).